The sequence spans 141 residues: Nucleoside diphosphate kinase (141 aa).

ATP is bound by residues Lys-11, Phe-59, Arg-87, Thr-93, Arg-104, and Asn-114. Catalysis depends on His-117, which acts as the Pros-phosphohistidine intermediate.

This sequence belongs to the NDK family. In terms of assembly, homotetramer. It depends on Mg(2+) as a cofactor.

It is found in the cytoplasm. The catalysed reaction is a 2'-deoxyribonucleoside 5'-diphosphate + ATP = a 2'-deoxyribonucleoside 5'-triphosphate + ADP. The enzyme catalyses a ribonucleoside 5'-diphosphate + ATP = a ribonucleoside 5'-triphosphate + ADP. Major role in the synthesis of nucleoside triphosphates other than ATP. The ATP gamma phosphate is transferred to the NDP beta phosphate via a ping-pong mechanism, using a phosphorylated active-site intermediate. This chain is Nucleoside diphosphate kinase, found in Cupriavidus taiwanensis (strain DSM 17343 / BCRC 17206 / CCUG 44338 / CIP 107171 / LMG 19424 / R1) (Ralstonia taiwanensis (strain LMG 19424)).